A 216-amino-acid chain; its full sequence is UDP-N-acetylbacillosamine N-acetyltransferase (216 aa).

Catalysis depends on histidine 137, which acts as the Proton acceptor. Histidine 146 provides a ligand contact to acetyl-CoA.

It belongs to the transferase hexapeptide repeat family. As to quaternary structure, forms oligomers.

The catalysed reaction is UDP-N-acetylbacillosamine + acetyl-CoA = UDP-N,N'-diacetylbacillosamine + CoA + H(+). Catalyzes the conversion of UDP-2,4,6-trideoxy-2-acetamido-4-amino glucose to UDP-2,4,6-trideoxy-2,4-diacetamido glucose, commonly known as UDP-N,N'-diacetylbacillosamine (UDP-diNAcBac). This chain is UDP-N-acetylbacillosamine N-acetyltransferase, found in Bacillus subtilis (strain 168).